We begin with the raw amino-acid sequence, 162 residues long: MDPTMPTPHTISGTSPFPRNSSTAAEMIVTEQEHLQPRHRRSRKRDRPPPTPPSGNIKAAPAPLPEGGGHGHEEEARDEDVDRFYALLDEVREMRELWRRNGDCVATKRTSVDGGQKKQDRQQLWRPTFVMEDFAFELKGSQVVQPEKKVDSAPNLDLSLSM.

The disordered stretch occupies residues 1–80 (MDPTMPTPHT…GHEEEARDED (80 aa)). Residues 7 to 24 (TPHTISGTSPFPRNSSTA) show a composition bias toward polar residues. The span at 37–46 (PRHRRSRKRD) shows a compositional bias: basic residues. The segment covering 69 to 80 (GHGHEEEARDED) has biased composition (basic and acidic residues).

The protein belongs to the NPR1-interactor family. In terms of assembly, interacts with NPR1/NH1. Interacts with NPR3/NH3.

The protein localises to the nucleus. Its function is as follows. Binds to and represses NPR1/NH1-mediated transcriptional activation of LG2 in vitro. The sequence is that of NRR repressor homolog 3 from Oryza sativa subsp. japonica (Rice).